Reading from the N-terminus, the 339-residue chain is Holliday junction branch migration complex subunit RuvB (339 aa).

A large ATPase domain (RuvB-L) region spans residues 1–187; the sequence is MQGFEDENRI…FGVICKLDYY (187 aa). ATP is bound by residues Leu26, Arg27, Gly68, Lys71, Thr72, Thr73, 134 to 136, Arg177, Tyr187, and Arg224; that span reads EDF. Thr72 contributes to the Mg(2+) binding site. The tract at residues 188 to 258 is small ATPAse domain (RuvB-S); the sequence is TVDELSKIVL…VAKDALELLG (71 aa). The interval 261–339 is head domain (RuvB-H); that stretch reads SLGLDFVDEK…HLKIPYPNEK (79 aa). 3 residues coordinate DNA: Arg297, Arg316, and Arg321.

The protein belongs to the RuvB family. In terms of assembly, homohexamer. Forms an RuvA(8)-RuvB(12)-Holliday junction (HJ) complex. HJ DNA is sandwiched between 2 RuvA tetramers; dsDNA enters through RuvA and exits via RuvB. An RuvB hexamer assembles on each DNA strand where it exits the tetramer. Each RuvB hexamer is contacted by two RuvA subunits (via domain III) on 2 adjacent RuvB subunits; this complex drives branch migration. In the full resolvosome a probable DNA-RuvA(4)-RuvB(12)-RuvC(2) complex forms which resolves the HJ.

Its subcellular location is the cytoplasm. The catalysed reaction is ATP + H2O = ADP + phosphate + H(+). Its function is as follows. The RuvA-RuvB-RuvC complex processes Holliday junction (HJ) DNA during genetic recombination and DNA repair, while the RuvA-RuvB complex plays an important role in the rescue of blocked DNA replication forks via replication fork reversal (RFR). RuvA specifically binds to HJ cruciform DNA, conferring on it an open structure. The RuvB hexamer acts as an ATP-dependent pump, pulling dsDNA into and through the RuvAB complex. RuvB forms 2 homohexamers on either side of HJ DNA bound by 1 or 2 RuvA tetramers; 4 subunits per hexamer contact DNA at a time. Coordinated motions by a converter formed by DNA-disengaged RuvB subunits stimulates ATP hydrolysis and nucleotide exchange. Immobilization of the converter enables RuvB to convert the ATP-contained energy into a lever motion, pulling 2 nucleotides of DNA out of the RuvA tetramer per ATP hydrolyzed, thus driving DNA branch migration. The RuvB motors rotate together with the DNA substrate, which together with the progressing nucleotide cycle form the mechanistic basis for DNA recombination by continuous HJ branch migration. Branch migration allows RuvC to scan DNA until it finds its consensus sequence, where it cleaves and resolves cruciform DNA. The protein is Holliday junction branch migration complex subunit RuvB of Clostridioides difficile (strain 630) (Peptoclostridium difficile).